Here is a 374-residue protein sequence, read N- to C-terminus: Alcohol dehydrogenase S chain (374 aa).

Serine 2 bears the N-acetylserine mark. Residues cysteine 47, histidine 68, cysteine 98, cysteine 101, cysteine 104, cysteine 112, and cysteine 174 each contribute to the Zn(2+) site. NAD(+) is bound by residues 199 to 204, aspartate 223, lysine 228, 292 to 294, and arginine 369; these read GLGGVG and VGV.

The protein belongs to the zinc-containing alcohol dehydrogenase family. Class-I subfamily. Dimer of identical or non-identical chains of two types (E and S) coded by 2 separate genes at different loci. Zn(2+) serves as cofactor.

Its subcellular location is the cytoplasm. It catalyses the reaction a primary alcohol + NAD(+) = an aldehyde + NADH + H(+). The enzyme catalyses a secondary alcohol + NAD(+) = a ketone + NADH + H(+). The sequence is that of Alcohol dehydrogenase S chain from Equus caballus (Horse).